Reading from the N-terminus, the 360-residue chain is 3-dehydroquinate synthase (360 aa).

Residues 70 to 75 (DGESLK), 128 to 129 (TT), Lys141, and Lys150 contribute to the NAD(+) site. The Zn(2+) site is built by Glu182, His243, and His259.

Belongs to the sugar phosphate cyclases superfamily. Dehydroquinate synthase family. The cofactor is NAD(+). Co(2+) serves as cofactor. Requires Zn(2+) as cofactor.

Its subcellular location is the cytoplasm. It carries out the reaction 7-phospho-2-dehydro-3-deoxy-D-arabino-heptonate = 3-dehydroquinate + phosphate. The protein operates within metabolic intermediate biosynthesis; chorismate biosynthesis; chorismate from D-erythrose 4-phosphate and phosphoenolpyruvate: step 2/7. Its function is as follows. Catalyzes the conversion of 3-deoxy-D-arabino-heptulosonate 7-phosphate (DAHP) to dehydroquinate (DHQ). This Thermoplasma volcanium (strain ATCC 51530 / DSM 4299 / JCM 9571 / NBRC 15438 / GSS1) protein is 3-dehydroquinate synthase.